The sequence spans 398 residues: Dual-specificity RNA methyltransferase RlmN (398 aa).

E119 (proton acceptor) is an active-site residue. Positions E125–D364 constitute a Radical SAM core domain. Cysteines 132 and 369 form a disulfide. [4Fe-4S] cluster is bound by residues C139, C143, and C146. S-adenosyl-L-methionine contacts are provided by residues G193–E194, S225, S247–H249, and N326. The active-site S-methylcysteine intermediate is the C369.

This sequence belongs to the radical SAM superfamily. RlmN family. [4Fe-4S] cluster serves as cofactor.

The protein resides in the cytoplasm. The enzyme catalyses adenosine(2503) in 23S rRNA + 2 reduced [2Fe-2S]-[ferredoxin] + 2 S-adenosyl-L-methionine = 2-methyladenosine(2503) in 23S rRNA + 5'-deoxyadenosine + L-methionine + 2 oxidized [2Fe-2S]-[ferredoxin] + S-adenosyl-L-homocysteine. It carries out the reaction adenosine(37) in tRNA + 2 reduced [2Fe-2S]-[ferredoxin] + 2 S-adenosyl-L-methionine = 2-methyladenosine(37) in tRNA + 5'-deoxyadenosine + L-methionine + 2 oxidized [2Fe-2S]-[ferredoxin] + S-adenosyl-L-homocysteine. In terms of biological role, specifically methylates position 2 of adenine 2503 in 23S rRNA and position 2 of adenine 37 in tRNAs. m2A2503 modification seems to play a crucial role in the proofreading step occurring at the peptidyl transferase center and thus would serve to optimize ribosomal fidelity. The protein is Dual-specificity RNA methyltransferase RlmN of Yersinia pseudotuberculosis serotype IB (strain PB1/+).